The following is a 480-amino-acid chain: DnaJ homolog subfamily A member 3, mitochondrial (480 aa).

Omega-N-methylarginine; by CARM1 is present on Arg-58. The region spanning 93 to 158 (DYYQILGVPR…VKRKQYDAYG (66 aa)) is the J domain. Lys-134 carries the N6-acetyllysine modification. A CR-type zinc finger spans residues 223 to 301 (GVNKEFTVNI…CRGAGQAKQK (79 aa)). Zn(2+) is bound at residue Cys-236. CXXCXGXG motif repeat units lie at residues 236–243 (CERCDGKG), 253–260 (CHYCGGSG), 275–282 (CRRCGGRG), and 289–296 (CVVCRGAG). Arg-238 bears the Omega-N-methylarginine; by CARM1 mark. Zn(2+)-binding residues include Cys-239, Cys-253, Cys-256, Cys-275, Cys-278, Cys-289, and Cys-292. Omega-N-methylarginine; by CARM1 is present on Arg-293. At Ser-398 the chain carries Phosphoserine. Residues 437 to 468 (TVNGVTHTSTGGRTMDSSAGSKDRREAGEDNE) are disordered. Residues 439–456 (NGVTHTSTGGRTMDSSAG) are compositionally biased toward polar residues.

In terms of assembly, interacts with JAK2, HSPA9B and IFN-gammaR2 chain. Interacts with Ras GTPase-activating protein 1 (RASA1). Isoform 2 interacts with MUSK (via the cytoplasmic domain). Tyrosine phosphorylated.

The protein localises to the mitochondrion matrix. The protein resides in the cytoplasm. Its subcellular location is the cytosol. It localises to the postsynaptic cell membrane. Modulates apoptotic signal transduction or effector structures within the mitochondrial matrix. Affect cytochrome C release from the mitochondria and caspase 3 activation, but not caspase 8 activation. Isoform 1 increases apoptosis triggered by both TNF and the DNA-damaging agent mytomycin C; in sharp contrast, isoform 2 suppresses apoptosis. Can modulate IFN-gamma-mediated transcriptional activity. Isoform 2 may play a role in neuromuscular junction development as an effector of the MUSK signaling pathway. The sequence is that of DnaJ homolog subfamily A member 3, mitochondrial (Dnaja3) from Mus musculus (Mouse).